The primary structure comprises 141 residues: Large ribosomal subunit protein uL11 (141 aa).

The protein belongs to the universal ribosomal protein uL11 family. As to quaternary structure, part of the ribosomal stalk of the 50S ribosomal subunit. Interacts with L10 and the large rRNA to form the base of the stalk. L10 forms an elongated spine to which L12 dimers bind in a sequential fashion forming a multimeric L10(L12)X complex. In terms of processing, one or more lysine residues are methylated.

Functionally, forms part of the ribosomal stalk which helps the ribosome interact with GTP-bound translation factors. The sequence is that of Large ribosomal subunit protein uL11 from Geobacter sulfurreducens (strain ATCC 51573 / DSM 12127 / PCA).